Here is a 241-residue protein sequence, read N- to C-terminus: Histone H1-II (241 aa).

The segment covering 1 to 10 has biased composition (basic and acidic residues); that stretch reads MASDAPEVKA. Disordered stretches follow at residues 1-27 and 89-241; these read MASD…THPP and NSYK…AKKA. Residues 11 to 20 are compositionally biased toward basic residues; the sequence is PKAKTQKKPK. Positions 24–95 constitute an H15 domain; sequence THPPYIQMVT…KVKNSYKLSD (72 aa). Basic residues predominate over residues 99-111; sequence SKAKAAAKPKAAP. 3 repeat units span residues 111 to 116, 117 to 122, and 123 to 128. An 8 X 6 AA repeats of P-K-K-A-[AK]-A region spans residues 111–217; it reads PKKAAAPKKA…KAATPKKAKA (107 aa). Residues 129–155 are compositionally biased toward basic and acidic residues; the sequence is PKKEGEKKAVKPKSEKKAAKPKTEKKP. 2 stretches are compositionally biased toward basic residues: residues 156 to 184 and 194 to 241; these read KAAK…KATP and AAPK…AKKA. The DNA-binding element occupies 183–186; that stretch reads TPKK. Tandem repeats lie at residues 184–189, 190–195, 196–201, 204–209, and 212–217. DNA-binding regions lie at residues 203-206 and 211-214; these read TPKK.

The protein belongs to the histone H1/H5 family.

Its subcellular location is the nucleus. It localises to the chromosome. Histones H1 are necessary for the condensation of nucleosome chains into higher-order structures. The chain is Histone H1-II (H1-II) from Volvox carteri (Green alga).